The chain runs to 503 residues: MEEFQGYLELDRSRXHYLLYPLLFREYIYALAHDHGLNRSMLFENAXDDXKSSSIIVKRLITRMYQQNPLIFSAKDSIQNQFFGHNKNLYSQILSEGFAVIVEXPISLRFLFSLERKEIAKSYNLRSIHSIFSFLEDKFTHLDYVSDVLIPYHIHLEILXQTLRYWVKDASSLHLLRFFLHDYWNSFITPKKHITFFLKGNPRLFLFLYNSHICEYEYIFPFLRNQSSHLRSTSSGIFXERIYFYVKIEHFVKVFFDNNFQCILWFLKDPFMHYVRYQAKFXVASKDTPLLMNKWKCYLVNLWQYHFSVWFQPGRIDINQLCKYSIYFLGYRSSVRLNSSVVRSQMLENLXLINNAMKKFETIVPIIPLIGSLYKSNFCNTFGHPISQPTRTHSSDSDIIDRFLRICRNLSHYHSGSSKKKSLYRVKYILRLSCVKTLARKHKRTVRTFVKRLGSEFLEEFLTEEEVVLSLIFPRTYSTSRRLYRGQIWXLDITSINDLANYE.

Belongs to the intron maturase 2 family. MatK subfamily.

Its subcellular location is the plastid. It is found in the chloroplast. Its function is as follows. Usually encoded in the trnK tRNA gene intron. Probably assists in splicing its own and other chloroplast group II introns. This is Maturase K from Kunzea baxteri (Scarlet kunzea).